A 380-amino-acid chain; its full sequence is Queuine tRNA-ribosyltransferase (380 aa).

D96 functions as the Proton acceptor in the catalytic mechanism. Residues 96–100 (DSGGF), D150, Q193, and G220 each bind substrate. The interval 251-257 (GVGAPDS) is RNA binding. D270 functions as the Nucleophile in the catalytic mechanism. Positions 275 to 279 (TRIAR) are RNA binding; important for wobble base 34 recognition. C308, C310, C313, and H339 together coordinate Zn(2+).

It belongs to the queuine tRNA-ribosyltransferase family. As to quaternary structure, homodimer. Within each dimer, one monomer is responsible for RNA recognition and catalysis, while the other monomer binds to the replacement base PreQ1. The cofactor is Zn(2+).

It carries out the reaction 7-aminomethyl-7-carbaguanine + guanosine(34) in tRNA = 7-aminomethyl-7-carbaguanosine(34) in tRNA + guanine. It participates in tRNA modification; tRNA-queuosine biosynthesis. In terms of biological role, catalyzes the base-exchange of a guanine (G) residue with the queuine precursor 7-aminomethyl-7-deazaguanine (PreQ1) at position 34 (anticodon wobble position) in tRNAs with GU(N) anticodons (tRNA-Asp, -Asn, -His and -Tyr). Catalysis occurs through a double-displacement mechanism. The nucleophile active site attacks the C1' of nucleotide 34 to detach the guanine base from the RNA, forming a covalent enzyme-RNA intermediate. The proton acceptor active site deprotonates the incoming PreQ1, allowing a nucleophilic attack on the C1' of the ribose to form the product. After dissociation, two additional enzymatic reactions on the tRNA convert PreQ1 to queuine (Q), resulting in the hypermodified nucleoside queuosine (7-(((4,5-cis-dihydroxy-2-cyclopenten-1-yl)amino)methyl)-7-deazaguanosine). The sequence is that of Queuine tRNA-ribosyltransferase from Streptococcus pyogenes serotype M49 (strain NZ131).